Here is a 512-residue protein sequence, read N- to C-terminus: GMP synthase [glutamine-hydrolyzing] (512 aa).

The region spanning 9–198 (GVLVVDFGGQ…WLSLVGAPRT (190 aa)) is the Glutamine amidotransferase type-1 domain. Residue cysteine 87 is the Nucleophile of the active site. Catalysis depends on residues histidine 173 and glutamate 175. A GMPS ATP-PPase domain is found at 199-387 (WRPGDMVSEL…LGVPRELIWK (189 aa)). ATP is bound at residue 226 to 232 (SGGVDST).

It catalyses the reaction XMP + L-glutamine + ATP + H2O = GMP + L-glutamate + AMP + diphosphate + 2 H(+). Its pathway is purine metabolism; GMP biosynthesis; GMP from XMP (L-Gln route): step 1/1. Its function is as follows. Catalyzes the synthesis of GMP from XMP. This Aeropyrum pernix (strain ATCC 700893 / DSM 11879 / JCM 9820 / NBRC 100138 / K1) protein is GMP synthase [glutamine-hydrolyzing] (guaA).